A 177-amino-acid chain; its full sequence is Endoribonuclease YbeY (177 aa).

Zn(2+) contacts are provided by His-118, His-122, and His-128.

It belongs to the endoribonuclease YbeY family. It depends on Zn(2+) as a cofactor.

It localises to the cytoplasm. In terms of biological role, single strand-specific metallo-endoribonuclease involved in late-stage 70S ribosome quality control and in maturation of the 3' terminus of the 16S rRNA. The polypeptide is Endoribonuclease YbeY (Mycobacterium sp. (strain JLS)).